A 214-amino-acid chain; its full sequence is Ribosomal RNA small subunit methyltransferase G (214 aa).

Residues Gly81, Met86, 132–133, and Arg147 contribute to the S-adenosyl-L-methionine site; that span reads VE.

Belongs to the methyltransferase superfamily. RNA methyltransferase RsmG family.

The protein resides in the cytoplasm. It carries out the reaction guanosine(527) in 16S rRNA + S-adenosyl-L-methionine = N(7)-methylguanosine(527) in 16S rRNA + S-adenosyl-L-homocysteine. Functionally, specifically methylates the N7 position of guanine in position 527 of 16S rRNA. The sequence is that of Ribosomal RNA small subunit methyltransferase G from Ectopseudomonas mendocina (strain ymp) (Pseudomonas mendocina).